The following is a 485-amino-acid chain: Glycogen synthase (485 aa).

Lysine 20 lines the ADP-alpha-D-glucose pocket.

The protein belongs to the glycosyltransferase 1 family. Bacterial/plant glycogen synthase subfamily.

It carries out the reaction [(1-&gt;4)-alpha-D-glucosyl](n) + ADP-alpha-D-glucose = [(1-&gt;4)-alpha-D-glucosyl](n+1) + ADP + H(+). Its pathway is glycan biosynthesis; glycogen biosynthesis. Synthesizes alpha-1,4-glucan chains using ADP-glucose. This chain is Glycogen synthase, found in Vibrio parahaemolyticus serotype O3:K6 (strain RIMD 2210633).